The following is a 311-amino-acid chain: Methionyl-tRNA formyltransferase (311 aa).

110 to 113 (SLLP) is a binding site for (6S)-5,6,7,8-tetrahydrofolate.

This sequence belongs to the Fmt family.

The enzyme catalyses L-methionyl-tRNA(fMet) + (6R)-10-formyltetrahydrofolate = N-formyl-L-methionyl-tRNA(fMet) + (6S)-5,6,7,8-tetrahydrofolate + H(+). Its function is as follows. Attaches a formyl group to the free amino group of methionyl-tRNA(fMet). The formyl group appears to play a dual role in the initiator identity of N-formylmethionyl-tRNA by promoting its recognition by IF2 and preventing the misappropriation of this tRNA by the elongation apparatus. In Streptococcus pyogenes serotype M2 (strain MGAS10270), this protein is Methionyl-tRNA formyltransferase.